The chain runs to 2971 residues: uncharacterized protein (2971 aa).

The disordered stretch occupies residues 929–964; the sequence is SANFSNGPEESSLSTRLHIQKKRKAKKQRLETRRQK. Polar residues predominate over residues 936–945; the sequence is PEESSLSTRL. The segment covering 946-955 has biased composition (basic residues); that stretch reads HIQKKRKAKK.

Its subcellular location is the plastid. The protein localises to the chloroplast. This is an uncharacterized protein from Chlamydomonas reinhardtii (Chlamydomonas smithii).